We begin with the raw amino-acid sequence, 157 residues long: ATP synthase subunit b 1 (157 aa).

A helical transmembrane segment spans residues 7 to 29 (LFGQMVTFALLVWFTMKYVWPPL).

The protein belongs to the ATPase B chain family. In terms of assembly, F-type ATPases have 2 components, F(1) - the catalytic core - and F(0) - the membrane proton channel. F(1) has five subunits: alpha(3), beta(3), gamma(1), delta(1), epsilon(1). F(0) has three main subunits: a(1), b(2) and c(10-14). The alpha and beta chains form an alternating ring which encloses part of the gamma chain. F(1) is attached to F(0) by a central stalk formed by the gamma and epsilon chains, while a peripheral stalk is formed by the delta and b chains.

The protein localises to the cell inner membrane. Functionally, f(1)F(0) ATP synthase produces ATP from ADP in the presence of a proton or sodium gradient. F-type ATPases consist of two structural domains, F(1) containing the extramembraneous catalytic core and F(0) containing the membrane proton channel, linked together by a central stalk and a peripheral stalk. During catalysis, ATP synthesis in the catalytic domain of F(1) is coupled via a rotary mechanism of the central stalk subunits to proton translocation. Component of the F(0) channel, it forms part of the peripheral stalk, linking F(1) to F(0). This chain is ATP synthase subunit b 1, found in Methylococcus capsulatus (strain ATCC 33009 / NCIMB 11132 / Bath).